The sequence spans 589 residues: Deoxynucleoside triphosphate triphosphohydrolase SAMHD1 (589 aa).

N-acetylmethionine is present on M1. A compositionally biased stretch (polar residues) spans 1–10; sequence MQSADSQNTP. The tract at residues 1–41 is disordered; it reads MQSADSQNTPKRPRRDGSPRTPPDSPLADAETSPSHDLDPD. S18 is modified (phosphoserine). Residue T21 is modified to Phosphothreonine. S33 and S88 each carry phosphoserine. Residues 45–100 form the SAM domain; it reads WGPEQVWSFLRRCGFSDSELLKRCREKRMSGSLLPFPEDLGISSHGKKMKLLNCIQ. Positions 104 and 105 each coordinate GTP. N107 is a binding site for dGTP. GTP contacts are provided by D125, Q130, and R133. DGTP is bound by residues Q137, L138, V144, and R152. Q137 lines the dATP pocket. Q137 serves as a coordination point for dCTP. Q137 is a dTTP binding site. Residue R152 participates in dATP binding. Residue R152 coordinates dCTP. Position 152 (R152) interacts with dTTP. The HD domain occupies 152-277; it reads RFEHSLGVGY…IKDASKWLYK (126 aa). Mn(2+) contacts are provided by H155, H194, and D195. H198 and H203 together coordinate dATP. 2 residues coordinate dCTP: H198 and H203. Positions 198 and 203 each coordinate dTTP. The active site involves H221. D300 is a Mn(2+) binding site. DGTP-binding residues include K301, Y304, D308, R322, R341, K343, N347, R355, Y363, Q364, H365, and K366. DATP is bound by residues K301, Y304, and D308. 3 residues coordinate dCTP: K301, Y304, and D308. DTTP is bound by residues K301, Y304, and D308. R355 is a dATP binding site. Position 355 (R355) interacts with dCTP. Residue Q364 participates in dATP binding. Q364 is a binding site for dCTP. Q364 contacts dTTP. The GTP site is built by R440 and K444. A Glycyl lysine isopeptide (Lys-Gly) (interchain with G-Cter in SUMO2) cross-link involves residue K457. Position 512 (K512) interacts with GTP. K512 is a binding site for dGTP.

This sequence belongs to the SAMHD1 family. As to quaternary structure, homodimer; in absence of GTP and dNTP. Homotetramer; in GTP- and dNTP-bound form. Interacts with MRE11; leading to stimulate the exonuclease activity of MRE11. Interacts with RBBP8/CtIP. Interacts (via its C-terminus) with CD81. Zn(2+) serves as cofactor.

The protein localises to the nucleus. It localises to the chromosome. The enzyme catalyses a 2'-deoxyribonucleoside 5'-triphosphate + H2O = a 2'-deoxyribonucleoside + triphosphate + H(+). It catalyses the reaction dATP + H2O = 2'-deoxyadenosine + triphosphate + H(+). The catalysed reaction is dCTP + H2O = 2'-deoxycytidine + triphosphate + H(+). It carries out the reaction dGTP + H2O = 2'-deoxyguanosine + triphosphate + H(+). The enzyme catalyses dTTP + H2O = thymidine + triphosphate + H(+). Allosterically activated and regulated via the combined actions of GTP and dNTPs (dATP, dGTP, dTTP and dCTP): Allosteric site 1 binds GTP, while allosteric site 2 binds dNTP. Allosteric activation promotes the formation of highly active homotetramers. Protein that acts both as a host restriction factor involved in defense response to virus and as a regulator of DNA end resection at stalled replication forks. Has deoxynucleoside triphosphate (dNTPase) activity, which is required to restrict infection by viruses: dNTPase activity reduces cellular dNTP levels to levels too low for retroviral reverse transcription to occur, blocking early-stage virus replication in dendritic and other myeloid cells. Likewise, suppresses LINE-1 retrotransposon activity. In addition to virus restriction, dNTPase activity acts as a regulator of DNA precursor pools by regulating dNTP pools. Functions during S phase at stalled DNA replication forks to promote the resection of gapped or reversed forks: acts by stimulating the exonuclease activity of MRE11, activating the ATR-CHK1 pathway and allowing the forks to restart replication. Its ability to promote degradation of nascent DNA at stalled replication forks is required to prevent induction of type I interferons, thereby preventing chronic inflammation. Ability to promote DNA end resection at stalled replication forks is independent of dNTPase activity. Enhances immunoglobulin hypermutation in B-lymphocytes by promoting transversion mutation. In Bos taurus (Bovine), this protein is Deoxynucleoside triphosphate triphosphohydrolase SAMHD1.